We begin with the raw amino-acid sequence, 182 residues long: Large ribosomal subunit protein uL16 (182 aa).

This sequence belongs to the universal ribosomal protein uL16 family.

In Pyrobaculum islandicum (strain DSM 4184 / JCM 9189 / GEO3), this protein is Large ribosomal subunit protein uL16.